Reading from the N-terminus, the 309-residue chain is Low-density lipoprotein receptor-related protein 1 (309 aa).

Belongs to the LDLR family.

It localises to the endoplasmic reticulum. It is found in the golgi apparatus. The protein localises to the endosome. Involved in endocytosis, fatty acid beta-oxidation and infectious growth. Plays a critical role in the accumulation of MSN2 from the cytosol to the nucleus by activating the cyclic AMP signaling pathway. MSN2 can then target the dienoyl-coenzyme A isomerase DCI1 and other genes involved in fatty acid beta-oxidation, which is important for lipid droplets degradation and infectious growth. This is Low-density lipoprotein receptor-related protein 1 from Pyricularia oryzae (strain 70-15 / ATCC MYA-4617 / FGSC 8958) (Rice blast fungus).